The primary structure comprises 276 residues: NADPH-dependent 7-cyano-7-deazaguanine reductase (276 aa).

Residue 83 to 85 (IES) participates in substrate binding. 85-86 (SK) serves as a coordination point for NADPH. C184 functions as the Thioimide intermediate in the catalytic mechanism. The Proton donor role is filled by D191. A substrate-binding site is contributed by 223 to 224 (HE). 252–253 (RG) is a binding site for NADPH.

The protein belongs to the GTP cyclohydrolase I family. QueF type 2 subfamily. As to quaternary structure, homodimer.

Its subcellular location is the cytoplasm. It catalyses the reaction 7-aminomethyl-7-carbaguanine + 2 NADP(+) = 7-cyano-7-deazaguanine + 2 NADPH + 3 H(+). Its pathway is tRNA modification; tRNA-queuosine biosynthesis. Functionally, catalyzes the NADPH-dependent reduction of 7-cyano-7-deazaguanine (preQ0) to 7-aminomethyl-7-deazaguanine (preQ1). In Pseudomonas syringae pv. syringae (strain B728a), this protein is NADPH-dependent 7-cyano-7-deazaguanine reductase.